A 122-amino-acid chain; its full sequence is MADNDRTALRRKALRRGLMSEYVAAVFLMLKGYRILALRHRTRLGEIDIIARKGDLAVFVEVKARHGEAAAVDAVSVIAQKRIRAASDLWLARQADQARLSQRYDIVAVMPGRLPRHFPDAF.

It belongs to the UPF0102 family.

This Rhizobium leguminosarum bv. trifolii (strain WSM2304) protein is UPF0102 protein Rleg2_4331.